Consider the following 46-residue polypeptide: LVCFVVVVFMAAAAAMAGADRELKYLSHGGVDFPVPAGRLDGVVSR.

This sequence belongs to the peroxidase family. Classical plant (class III) peroxidase subfamily. Requires heme b as cofactor. Ca(2+) is required as a cofactor.

It is found in the secreted. It carries out the reaction 2 a phenolic donor + H2O2 = 2 a phenolic radical donor + 2 H2O. Its function is as follows. Removal of H(2)O(2), oxidation of toxic reductants, biosynthesis and degradation of lignin, suberization, auxin catabolism, response to environmental stresses such as wounding, pathogen attack and oxidative stress. These functions might be dependent on each isozyme/isoform in each plant tissue. This is Peroxidase 1 from Catharanthus roseus (Madagascar periwinkle).